A 157-amino-acid chain; its full sequence is Snaclec A16 (157 aa).

Residues 1-23 (MGRLISVSFGLLVVFLSLSGTGA) form the signal peptide. 3 cysteine pairs are disulfide-bonded: cysteine 27–cysteine 38, cysteine 55–cysteine 149, and cysteine 124–cysteine 141. Positions 34–150 (YEGHCYKVFN…CELAYHFICM (117 aa)) constitute a C-type lectin domain.

Belongs to the snaclec family. In terms of assembly, heterodimer; disulfide-linked. Expressed by the venom gland.

Its subcellular location is the secreted. Interferes with one step of hemostasis (modulation of platelet aggregation, or coagulation cascade, for example). This is Snaclec A16 from Macrovipera lebetinus (Levantine viper).